The primary structure comprises 892 residues: Translation initiation factor IF-2 (892 aa).

Basic and acidic residues-rich tracts occupy residues valine 93 to valine 159 and aspartate 166 to lysine 216. The disordered stretch occupies residues valine 93–proline 304. A compositionally biased stretch (basic residues) spans glycine 254 to lysine 269. Residues histidine 270 to alanine 282 are compositionally biased toward basic and acidic residues. In terms of domain architecture, tr-type G spans proline 391–lysine 560. Residues glycine 400–threonine 407 are G1. Glycine 400–threonine 407 provides a ligand contact to GTP. The tract at residues glycine 425–histidine 429 is G2. Positions aspartate 446–glycine 449 are G3. GTP contacts are provided by residues aspartate 446–histidine 450 and asparagine 500–aspartate 503. Positions asparagine 500 to aspartate 503 are G4. Residues serine 536–lysine 538 form a G5 region.

Belongs to the TRAFAC class translation factor GTPase superfamily. Classic translation factor GTPase family. IF-2 subfamily.

It is found in the cytoplasm. One of the essential components for the initiation of protein synthesis. Protects formylmethionyl-tRNA from spontaneous hydrolysis and promotes its binding to the 30S ribosomal subunits. Also involved in the hydrolysis of GTP during the formation of the 70S ribosomal complex. The protein is Translation initiation factor IF-2 of Salmonella gallinarum (strain 287/91 / NCTC 13346).